We begin with the raw amino-acid sequence, 455 residues long: Beta-cyclopiazonate dehydrogenase (455 aa).

Residues 1-25 (MAVRIARFLGLSTVAYLALANGIDA) form the signal peptide.

Belongs to the beta-cyclopiazonate dehydrogenase family. Requires FAD as cofactor.

It catalyses the reaction beta-cyclopiazonate + A = alpha-cyclopiazonate + AH2. Beta-cyclopiazonate dehydrogenase involved in the synthesis of the fungal neurotoxin alpha-cyclopiazonic acid (CPA). CpaO carries out the dehydrogenation of beta-CPA to yield an unstable enimine product, which is captured by intramolecular cyclization to create the pentacyclic fused scaffold of alpha-cyclopiazonate. The chain is Beta-cyclopiazonate dehydrogenase from Aspergillus oryzae (strain ATCC 42149 / RIB 40) (Yellow koji mold).